The sequence spans 193 residues: Thymidylate kinase (193 aa).

ATP is bound at residue Gly-7–Ser-14.

This sequence belongs to the thymidylate kinase family.

The enzyme catalyses dTMP + ATP = dTDP + ADP. Phosphorylation of dTMP to form dTDP in both de novo and salvage pathways of dTTP synthesis. This chain is Thymidylate kinase, found in Coprothermobacter proteolyticus (strain ATCC 35245 / DSM 5265 / OCM 4 / BT).